The following is a 746-amino-acid chain: 1,4-alpha-glucan branching enzyme GlgB (746 aa).

Asp418 serves as the catalytic Nucleophile. Glu471 acts as the Proton donor in catalysis.

The protein belongs to the glycosyl hydrolase 13 family. GlgB subfamily. In terms of assembly, monomer.

It carries out the reaction Transfers a segment of a (1-&gt;4)-alpha-D-glucan chain to a primary hydroxy group in a similar glucan chain.. The protein operates within glycan biosynthesis; glycogen biosynthesis. In terms of biological role, catalyzes the formation of the alpha-1,6-glucosidic linkages in glycogen by scission of a 1,4-alpha-linked oligosaccharide from growing alpha-1,4-glucan chains and the subsequent attachment of the oligosaccharide to the alpha-1,6 position. The chain is 1,4-alpha-glucan branching enzyme GlgB from Nitrosospira multiformis (strain ATCC 25196 / NCIMB 11849 / C 71).